The sequence spans 97 residues: uncharacterized protein (97 aa).

This is an uncharacterized protein from Mycoplasma capricolum subsp. capricolum (strain California kid / ATCC 27343 / NCTC 10154).